The sequence spans 196 residues: Probable GTP-binding protein EngB (196 aa).

Residues 22 to 195 form the EngB-type G domain; that stretch reads NIPEIALVGR…WQWIEERMGK (174 aa). Residues 30-37, 57-61, 75-78, 142-145, and 174-176 each bind GTP; these read GRSNVGKS, GKTQT, DVPG, TKID, and FSA. Mg(2+) contacts are provided by S37 and T59.

It belongs to the TRAFAC class TrmE-Era-EngA-EngB-Septin-like GTPase superfamily. EngB GTPase family. Requires Mg(2+) as cofactor.

Functionally, necessary for normal cell division and for the maintenance of normal septation. The protein is Probable GTP-binding protein EngB of Limosilactobacillus reuteri (strain DSM 20016) (Lactobacillus reuteri).